The primary structure comprises 114 residues: NADH-ubiquinone oxidoreductase chain 3 (114 aa).

Transmembrane regions (helical) follow at residues 3-23 (LITL…INTY), 52-72 (IQFF…VLLL), and 86-106 (TILL…YEWL).

It belongs to the complex I subunit 3 family.

Its subcellular location is the mitochondrion membrane. It catalyses the reaction a ubiquinone + NADH + 5 H(+)(in) = a ubiquinol + NAD(+) + 4 H(+)(out). Core subunit of the mitochondrial membrane respiratory chain NADH dehydrogenase (Complex I) that is believed to belong to the minimal assembly required for catalysis. Complex I functions in the transfer of electrons from NADH to the respiratory chain. The immediate electron acceptor for the enzyme is believed to be ubiquinone. The sequence is that of NADH-ubiquinone oxidoreductase chain 3 (MT-ND3) from Lycodon semicarinatus (Ryukyu odd-tooth snake).